We begin with the raw amino-acid sequence, 1320 residues long: Transcriptional activator MN1 (1320 aa).

The residue at position 1 (methionine 1) is an N-acetylmethionine. Disordered regions lie at residues 1–26 (MFGL…FNET), 92–121 (FGGQ…FGGP), 147–219 (PPFA…SLEP), 231–411 (LEYN…EYPI), 423–442 (SEPV…NQRL), 474–615 (NGSM…AGRL), 629–819 (SAWF…KDNL), 840–1150 (GAPN…PDEI), and 1247–1273 (PWEK…SASQ). The segment covering 98–113 (HHGHPGSHHPHQHHPH) has biased composition (basic residues). Low complexity-rich tracts occupy residues 202 to 214 (SFHG…GSDS) and 291 to 309 (QPPQ…QQQQ). The span at 338–366 (MQPPQQAPPPPQQQPPQQPPQQQPPPPPG) shows a compositional bias: pro residues. Residues 498 to 514 (FTPPVPDSFPSGPPLQH) show a composition bias toward pro residues. Low complexity-rich tracts occupy residues 523-550 (QQQQ…QQQQ) and 564-578 (RNQQ…LAQL). 2 stretches are compositionally biased toward gly residues: residues 582–596 (GDVG…GPVG) and 701–710 (QFGGSLGGLG). The span at 759–768 (SGPGVNSPPS) shows a compositional bias: low complexity. The segment covering 769–784 (AGGGGGSSGGGGGGGA) has biased composition (gly residues). 2 stretches are compositionally biased toward low complexity: residues 798 to 809 (SASKLGALSLGS) and 895 to 905 (GTSSSGSKASG). Positions 914-930 (DGTSLSPNYTLESTSGN) are enriched in polar residues. Phosphoserine occurs at positions 950 and 954. Residues 973–984 (GVSPGQQQASGA) show a composition bias toward low complexity. Serine 1007 is modified (phosphoserine). Over residues 1048 to 1066 (EVSTSYANEDEVSSSSDNP) the composition is skewed to polar residues. At serine 1081 the chain carries Phosphoserine. Over residues 1118–1128 (YGGGGGPGHPG) the composition is skewed to gly residues.

In terms of assembly, interacts with PBX1, PKNOX1, ZBTB24, E2F7, RING1. In terms of tissue distribution, widely expressed in fetal and adult tissues. Highest expression is observed in fetal brain and skeletal muscle, and adult skeletal muscle.

It localises to the nucleus. In terms of biological role, transcriptional activator which specifically regulates expression of TBX22 in the posterior region of the developing palate. Required during later stages of palate development for growth and medial fusion of the palatal shelves. Promotes maturation and normal function of calvarial osteoblasts, including expression of the osteoclastogenic cytokine TNFSF11/RANKL. Necessary for normal development of the membranous bones of the skull. May play a role in tumor suppression. The chain is Transcriptional activator MN1 (MN1) from Homo sapiens (Human).